The sequence spans 60 residues: uncharacterized protein (60 aa).

This is an uncharacterized protein from Treponema pallidum (strain Nichols).